The chain runs to 183 residues: Photosystem I assembly protein Ycf3 (183 aa).

3 TPR repeats span residues 35–68 (AFIY…EIDS), 72–105 (SYIL…NSFL), and 120–153 (GEQA…SPDN).

This sequence belongs to the Ycf3 family.

It localises to the plastid. The protein localises to the chloroplast thylakoid membrane. Essential for the assembly of the photosystem I (PSI) complex. May act as a chaperone-like factor to guide the assembly of the PSI subunits. This Adiantum capillus-veneris (Maidenhair fern) protein is Photosystem I assembly protein Ycf3.